The following is a 297-amino-acid chain: MKRPDYRTLQALDAVIRERGFERAAQKLCITQSAVSQRIKQLENLFGQPLLVRTVPPRPTEQGQKLLALLHQVELLEEEWLGNDTGIDTPLLLSLAVNADSLATWLLPALKPVLTDSPIRLNLQVEDETRTQERLRRGEVVGAVSIQPQPLPSCLVDQLGALDYLFVASKGFAERYFPNGVTRSALLKAPAVAFDHLDDMHQAFLQQNFDLSPGSVPCHIVNSSEAFVQLARQGTTCCMIPHLQIEKELASGELIDLTPGLFQRRMLFWHRFAPESRMMRKVTDALLEHGRQVLRQD.

The region spanning 4 to 60 (PDYRTLQALDAVIRERGFERAAQKLCITQSAVSQRIKQLENLFGQPLLVRTVPPRPT) is the HTH lysR-type domain. The segment at residues 21-40 (FERAAQKLCITQSAVSQRIK) is a DNA-binding region (H-T-H motif).

It belongs to the LysR transcriptional regulatory family. As to quaternary structure, homodimer.

In terms of biological role, controls the transcription of genes involved in arginine and lysine metabolism. This is HTH-type transcriptional regulator ArgP from Serratia proteamaculans (strain 568).